A 1150-amino-acid polypeptide reads, in one-letter code: Pyruvate carboxylase (1150 aa).

The Biotin carboxylation domain maps to 3–455; that stretch reads QIKKLLVANR…TTKFIEETPE (453 aa). ATP is bound by residues Lys119, Lys161, His211, and Glu278. Positions 123–319 constitute an ATP-grasp domain; the sequence is RTTAIKADLP…IVKTQILVAA (197 aa). Arg294 is a catalytic residue. Residues 533 to 802 form the Pyruvate carboxyltransferase domain; that stretch reads VLLTDTTFRD…HLRTDIEGME (270 aa). Position 541 to 545 (541 to 545) interacts with substrate; it reads RDAHQ. Mn(2+) is bound by residues Asp542, Lys712, His741, and His743. The residue at position 712 (Lys712) is an N6-carboxylysine. The Biotinyl-binding domain occupies 1071–1146; sequence KADKSNPSHI…ATGDLLIEIE (76 aa). At Lys1112 the chain carries N6-biotinyllysine.

In terms of assembly, homotetramer. The cofactor is biotin.

It catalyses the reaction hydrogencarbonate + pyruvate + ATP = oxaloacetate + ADP + phosphate + H(+). In terms of biological role, catalyzes a 2-step reaction, involving the ATP-dependent carboxylation of the covalently attached biotin in the first step and the transfer of the carboxyl group to pyruvate in the second. The chain is Pyruvate carboxylase (pycA) from Staphylococcus aureus (strain Mu50 / ATCC 700699).